Here is a 338-residue protein sequence, read N- to C-terminus: Beta-ketoacyl-[acyl-carrier-protein] synthase III (338 aa).

Active-site residues include C119 and H261. Residues 262-266 (QANQR) form an ACP-binding region. Residue N291 is part of the active site.

The protein belongs to the thiolase-like superfamily. FabH family. Homodimer.

It localises to the cytoplasm. It catalyses the reaction malonyl-[ACP] + acetyl-CoA + H(+) = 3-oxobutanoyl-[ACP] + CO2 + CoA. It participates in lipid metabolism; fatty acid biosynthesis. Functionally, catalyzes the condensation reaction of fatty acid synthesis by the addition to an acyl acceptor of two carbons from malonyl-ACP. Catalyzes the first condensation reaction which initiates fatty acid synthesis and may therefore play a role in governing the total rate of fatty acid production. Possesses both acetoacetyl-ACP synthase and acetyl transacylase activities. Its substrate specificity determines the biosynthesis of branched-chain and/or straight-chain of fatty acids. The protein is Beta-ketoacyl-[acyl-carrier-protein] synthase III of Prochlorococcus marinus (strain SARG / CCMP1375 / SS120).